The following is a 239-amino-acid chain: Probable septum site-determining protein MinC (239 aa).

This sequence belongs to the MinC family. Interacts with MinD and FtsZ.

In terms of biological role, cell division inhibitor that blocks the formation of polar Z ring septums. Rapidly oscillates between the poles of the cell to destabilize FtsZ filaments that have formed before they mature into polar Z rings. Prevents FtsZ polymerization. The polypeptide is Probable septum site-determining protein MinC (Colwellia psychrerythraea (strain 34H / ATCC BAA-681) (Vibrio psychroerythus)).